Reading from the N-terminus, the 430-residue chain is Adenylosuccinate synthetase (430 aa).

GTP is bound by residues 12 to 18 (GDEGKGK) and 40 to 42 (GHT). The active-site Proton acceptor is the Asp-13. Mg(2+) contacts are provided by Asp-13 and Gly-40. Residues 13 to 16 (DEGK), 38 to 41 (NAGH), Thr-128, Arg-142, Gln-223, Thr-238, and Arg-302 each bind IMP. His-41 serves as the catalytic Proton donor. 298–304 (TTTGRPR) lines the substrate pocket. Residues Arg-304, 330 to 332 (LLD), and 412 to 414 (SVG) each bind GTP.

It belongs to the adenylosuccinate synthetase family. In terms of assembly, homodimer. Requires Mg(2+) as cofactor.

It localises to the cytoplasm. It carries out the reaction IMP + L-aspartate + GTP = N(6)-(1,2-dicarboxyethyl)-AMP + GDP + phosphate + 2 H(+). It participates in purine metabolism; AMP biosynthesis via de novo pathway; AMP from IMP: step 1/2. Functionally, plays an important role in the de novo pathway of purine nucleotide biosynthesis. Catalyzes the first committed step in the biosynthesis of AMP from IMP. The protein is Adenylosuccinate synthetase of Listeria monocytogenes serotype 4a (strain HCC23).